The chain runs to 461 residues: Argininosuccinate lyase (461 aa).

It belongs to the lyase 1 family. Argininosuccinate lyase subfamily.

It localises to the cytoplasm. The enzyme catalyses 2-(N(omega)-L-arginino)succinate = fumarate + L-arginine. Its pathway is amino-acid biosynthesis; L-arginine biosynthesis; L-arginine from L-ornithine and carbamoyl phosphate: step 3/3. In Chlorobium chlorochromatii (strain CaD3), this protein is Argininosuccinate lyase.